Here is a 134-residue protein sequence, read N- to C-terminus: NADPH-dependent 7-cyano-7-deazaguanine reductase (134 aa).

Cys48 acts as the Thioimide intermediate in catalysis. Asp55 serves as the catalytic Proton donor. Substrate is bound by residues 70 to 72 (VEL) and 89 to 90 (QE).

Belongs to the GTP cyclohydrolase I family. QueF type 1 subfamily.

Its subcellular location is the cytoplasm. It carries out the reaction 7-aminomethyl-7-carbaguanine + 2 NADP(+) = 7-cyano-7-deazaguanine + 2 NADPH + 3 H(+). It participates in tRNA modification; tRNA-queuosine biosynthesis. Functionally, catalyzes the NADPH-dependent reduction of 7-cyano-7-deazaguanine (preQ0) to 7-aminomethyl-7-deazaguanine (preQ1). The sequence is that of NADPH-dependent 7-cyano-7-deazaguanine reductase from Caldanaerobacter subterraneus subsp. tengcongensis (strain DSM 15242 / JCM 11007 / NBRC 100824 / MB4) (Thermoanaerobacter tengcongensis).